A 157-amino-acid chain; its full sequence is Ribosome maturation factor RimP (157 aa).

Belongs to the RimP family.

It is found in the cytoplasm. Required for maturation of 30S ribosomal subunits. The sequence is that of Ribosome maturation factor RimP from Bacillus licheniformis (strain ATCC 14580 / DSM 13 / JCM 2505 / CCUG 7422 / NBRC 12200 / NCIMB 9375 / NCTC 10341 / NRRL NRS-1264 / Gibson 46).